We begin with the raw amino-acid sequence, 221 residues long: MGICMSMYTQVLVPVDADGDHHILWSRFYERWGSCFNPCAGLVNCLPPHSSALYLCHRMEARSRAPRRQLCPPGITWLALAYLLSCLLASSKAKVFSRCELAKEMHDFGLDGYRGYNLADWVCLAYYTSGFNTNAVDHEADGSTNNGIFQISSRRWCRTLASNGPNLCRIYCTDLLNNDLKDSIVCAMKIVQEPLGLGYWEAWRHHCQGRDLSDWVDGCDF.

Residues 1–69 (MGICMSMYTQ…EARSRAPRRQ (69 aa)) are Cytoplasmic-facing. The helical; Signal-anchor for type II membrane protein transmembrane segment at 70-90 (LCPPGITWLALAYLLSCLLAS) threads the bilayer. Residues 91–221 (SKAKVFSRCE…LSDWVDGCDF (131 aa)) lie on the Extracellular side of the membrane. In terms of domain architecture, C-type lysozyme spans 94–221 (KVFSRCELAK…LSDWVDGCDF (128 aa)). Intrachain disulfides connect Cys99-Cys219, Cys123-Cys207, Cys157-Cys172, and Cys168-Cys186.

It belongs to the glycosyl hydrolase 22 family. Interacts with ASTL. The processed form is expressed in sperm (at protein level). Expressed strongly in testis and epididymis and weakly in pancreas.

The protein localises to the cytoplasmic vesicle. It localises to the secretory vesicle. It is found in the acrosome membrane. Its subcellular location is the secreted. In terms of biological role, sperm surface membrane protein that may be involved in sperm-egg plasma membrane adhesion and fusion during fertilization. It could be a potential receptor for the egg oligosaccharide residue N-acetylglucosamine, which is present in the extracellular matrix over the egg plasma membrane. The processed form has no detectable bacteriolytic activity in vitro. The protein is Sperm acrosome membrane-associated protein 3 (Spaca3) of Mus musculus (Mouse).